The following is a 344-amino-acid chain: Anthranilate phosphoribosyltransferase (344 aa).

Residues glycine 85, 88–89 (GD), threonine 93, 95–98 (NIST), 113–121 (KHGGRSVSS), and serine 125 contribute to the 5-phospho-alpha-D-ribose 1-diphosphate site. Glycine 85 is an anthranilate binding site. Mg(2+) is bound at residue serine 97. Arginine 171 is a binding site for anthranilate. Residues aspartate 230 and glutamate 231 each contribute to the Mg(2+) site.

It belongs to the anthranilate phosphoribosyltransferase family. In terms of assembly, homodimer. Requires Mg(2+) as cofactor.

It catalyses the reaction N-(5-phospho-beta-D-ribosyl)anthranilate + diphosphate = 5-phospho-alpha-D-ribose 1-diphosphate + anthranilate. It functions in the pathway amino-acid biosynthesis; L-tryptophan biosynthesis; L-tryptophan from chorismate: step 2/5. In terms of biological role, catalyzes the transfer of the phosphoribosyl group of 5-phosphorylribose-1-pyrophosphate (PRPP) to anthranilate to yield N-(5'-phosphoribosyl)-anthranilate (PRA). The chain is Anthranilate phosphoribosyltransferase from Delftia acidovorans (strain DSM 14801 / SPH-1).